We begin with the raw amino-acid sequence, 155 residues long: Gas vesicle protein K (155 aa).

The protein belongs to the gas vesicle GvpK family.

It is found in the gas vesicle. Its function is as follows. Might be involved in nucleating gas vesicle formation. Gas vesicles (GV) are hollow, gas filled proteinaceous nanostructures. During planktonic growth they allow positioning of the organism at a favorable depth for light or nutrient acquisition. The chain is Gas vesicle protein K from Dolichospermum flosaquae (Anabaena flos-aquae).